We begin with the raw amino-acid sequence, 447 residues long: MTKQIITLVGRPNVGKSTLFNRLSIRKKAIVHDLPGVTRDRKYTDGKIGSFEFLLIDTPGLDEHPNSMGERLIEQTTKAILEADLICFMVDGRSGILPDDKLLSSFVRKYNKPAILVVNKCEKAFDFDKEYYKLGFDSMIAISAEHGTGLIDLYDEIIAKLPEEESIKTNIADPIKGDCLQIVVSGRPNAGKSTFINALINDERLLTGPEAGITRESIEIDWQYKNNHIKLIDTAGLRKKSTITKSLEKLSASDTINSIKFANTVILMIDALAPLKQQDLNIASHVVNEGRSIVIVVNKWDLVKESEKEAFQEEFYYQINTHLPQVKGIPVLFISAINKQNIEQVLDACLKIYKIWNKKITTSKLNEWLNFTTEAHLLPLQKGGRRVRVKYMTQTKTRPPTFKLFSNNPEKITDSYTRYLVNNMREAFDMPGVPIRFIYVKTKNPYV.

EngA-type G domains lie at 4–165 and 180–357; these read QIIT…PEEE and LQIV…KIWN. GTP-binding positions include 10 to 17, 57 to 61, 119 to 122, 186 to 193, 233 to 237, and 298 to 301; these read GRPNVGKS, DTPGL, NKCE, GRPNAGKS, DTAGL, and NKWD. Positions 358-443 constitute a KH-like domain; sequence KKITTSKLNE…PIRFIYVKTK (86 aa).

It belongs to the TRAFAC class TrmE-Era-EngA-EngB-Septin-like GTPase superfamily. EngA (Der) GTPase family. In terms of assembly, associates with the 50S ribosomal subunit.

In terms of biological role, GTPase that plays an essential role in the late steps of ribosome biogenesis. This Rickettsia africae (strain ESF-5) protein is GTPase Der.